A 187-amino-acid chain; its full sequence is Putative manganese efflux pump MntP (187 aa).

6 helical membrane passes run 3–23, 41–61, 62–82, 107–129, 143–163, and 166–186; these read MSATLILAFAMSMDAFAASIG, LIFGVIEAITPLIGWALGFFA, SQYILEWDHWVAFTLLLILGG, LLVCTAIATSLDAMAIGVGLAFL, ATMIMVTLGMMIGRYIGPILG, and AEIIGGLVLIGIGCNILYEHL.

It belongs to the MntP (TC 9.B.29) family.

It is found in the cell inner membrane. Functionally, probably functions as a manganese efflux pump. The protein is Putative manganese efflux pump MntP of Pectobacterium atrosepticum (strain SCRI 1043 / ATCC BAA-672) (Erwinia carotovora subsp. atroseptica).